A 366-amino-acid polypeptide reads, in one-letter code: MAGPAWISKVSRLLGAFHNPKQVTRGFTGGVQTVTLIPGDGIGPEISAAVMKIFDAAKAPIQWEERNVTAIQGPGGKWMIPSEAKESMDKNKMGLKGPLKTPIAAGHPSMNLLLRKTFDLYANVRPCVSIEGYKTPYTDVNIVTIRENTEGEYSGIEHVIVDGVVQSIKLITEGASKRIAEFAFEYARNNHRSNVTAVHKANIMRMSDGLFLQKCREVAENCKDIKFNEMYLDTVCLNMVQDPSQFDVLVMPNLYGDILSDLCAGLIGGLGVTPSGNIGANGVAIFESVHGTAPDIAGKDMANPTALLLSAVMMLRHMGLFDHAARIEAACFATIKDGKSLTKDLGGNAKCSDFTEEICRRVKDLD.

The N-terminal 27 residues, 1–27 (MAGPAWISKVSRLLGAFHNPKQVTRGF), are a transit peptide targeting the mitochondrion. Lysine 77 is subject to N6-succinyllysine. Residue threonine 101 is modified to Phosphothreonine. Residues arginine 115, arginine 125, and arginine 146 each contribute to the substrate site. N6-acetyllysine is present on lysine 223. Mg(2+)-binding residues include aspartate 233, aspartate 257, and aspartate 261. Lysine 343 bears the N6-acetyllysine; alternate mark. An N6-succinyllysine; alternate modification is found at lysine 343. Position 350 is an N6-succinyllysine (lysine 350).

It belongs to the isocitrate and isopropylmalate dehydrogenases family. Heterooligomer of subunits alpha (IDH3A), beta (IDH3B), and gamma (IDH3G) in the apparent ratio of 2:1:1. The heterodimer containing one IDH3A and one IDH3B subunit and the heterodimer containing one IDH3A and one IDH3G subunit assemble into a heterotetramer (which contains two subunits of IDH3A, one of IDH3B and one of IDH3G) and further into the heterooctamer. Requires Mg(2+) as cofactor. Mn(2+) serves as cofactor.

The protein resides in the mitochondrion. It carries out the reaction D-threo-isocitrate + NAD(+) = 2-oxoglutarate + CO2 + NADH. With respect to regulation, the heterotetramer and the heterodimer composed of IDH3A and IDH3G subunits can be allosterically activated by citrate (CIT) or/and ADP, and the two activators can act independently or synergistically. The heterodimer composed of IDH3A and IDH3B subunits cannot be allosterically regulated and the allosteric regulation of the heterotetramer is through the IDH3G subunit and not the IDH3B subunit. The IDH3G subunit contains the allosteric site which consists of a CIT-binding site and an ADP-binding site, and the binding of CIT and ADP causes conformational changes at the allosteric site which are transmitted to the active site in the catalytic subunit (IDH3A) through a cascade of conformational changes at the heterodimer interface, leading to stabilization of the isocitrate-binding at the active site and thus activation of the enzyme. ATP can activate the heterotetramer and the heterodimer composed of IDH3A and IDH3G subunits at low concentrations but inhibits their activities at high concentrations, whereas ATP exhibits only inhibitory effect on the heterodimer composed of IDH3A and IDH3B subunits. Its function is as follows. Catalytic subunit of the enzyme which catalyzes the decarboxylation of isocitrate (ICT) into alpha-ketoglutarate. The heterodimer composed of the alpha (IDH3A) and beta (IDH3B) subunits and the heterodimer composed of the alpha (IDH3A) and gamma (IDH3G) subunits, have considerable basal activity but the full activity of the heterotetramer (containing two subunits of IDH3A, one of IDH3B and one of IDH3G) requires the assembly and cooperative function of both heterodimers. The polypeptide is Isocitrate dehydrogenase [NAD] subunit alpha, mitochondrial (Pongo abelii (Sumatran orangutan)).